Here is a 499-residue protein sequence, read N- to C-terminus: Putative hydrolase YuaR (499 aa).

An N-terminal signal peptide occupies residues Met-1–Ser-26. Residues Gly-94–Arg-393 form the AB hydrolase-1 domain. Catalysis depends on Ser-207, which acts as the Nucleophile. Asp-433 is a catalytic residue. The active-site Proton donor is the His-460.

The protein belongs to the peptidase S33 family.

The sequence is that of Putative hydrolase YuaR (yuaR) from Escherichia coli (strain K12).